The following is a 182-amino-acid chain: MDRKTLDDTSKFLSYVLRHQPEAIGLKLDGEGWADIDALIAGAARDGRALDRALLGAVVENNDKKRFALSADGQRIRAVQGHSHAAVAIAYAPAVPPAVLYHGTASRFLDSIRERGLVPGSRHHVHLSARRATALEVGRRYGSPVLLEIDARDMHLAGHLFHQAENGVWLTERVPVRFIREA.

Belongs to the KptA/TPT1 family.

Its function is as follows. Removes the 2'-phosphate from RNA via an intermediate in which the phosphate is ADP-ribosylated by NAD followed by a presumed transesterification to release the RNA and generate ADP-ribose 1''-2''-cyclic phosphate (APPR&gt;P). May function as an ADP-ribosylase. The sequence is that of Probable RNA 2'-phosphotransferase from Pseudomonas aeruginosa (strain UCBPP-PA14).